The sequence spans 267 residues: 2-keto-3-deoxy-L-rhamnonate aldolase (267 aa).

H49 (proton acceptor) is an active-site residue. Residue Q151 coordinates substrate. Residue E153 participates in Mg(2+) binding. A178 and D179 together coordinate substrate. D179 contributes to the Mg(2+) binding site.

It belongs to the HpcH/HpaI aldolase family. KDR aldolase subfamily. In terms of assembly, homohexamer. Mg(2+) is required as a cofactor.

The catalysed reaction is 2-dehydro-3-deoxy-L-rhamnonate = (S)-lactaldehyde + pyruvate. Catalyzes the reversible retro-aldol cleavage of 2-keto-3-deoxy-L-rhamnonate (KDR) to pyruvate and lactaldehyde. The chain is 2-keto-3-deoxy-L-rhamnonate aldolase from Salmonella dublin (strain CT_02021853).